Consider the following 155-residue polypeptide: Cell division protein SepF (155 aa).

Positions 16–35 (TEDEEEDVETVEESEDVEEE) are enriched in acidic residues. The tract at residues 16 to 44 (TEDEEEDVETVEESEDVEEEESKKPQFIQ) is disordered.

It belongs to the SepF family. As to quaternary structure, homodimer. Interacts with FtsZ.

It localises to the cytoplasm. Functionally, cell division protein that is part of the divisome complex and is recruited early to the Z-ring. Probably stimulates Z-ring formation, perhaps through the cross-linking of FtsZ protofilaments. Its function overlaps with FtsA. The protein is Cell division protein SepF of Acetivibrio thermocellus (strain ATCC 27405 / DSM 1237 / JCM 9322 / NBRC 103400 / NCIMB 10682 / NRRL B-4536 / VPI 7372) (Clostridium thermocellum).